The following is a 700-amino-acid chain: Protein claret segregational (700 aa).

Residues Ser94 and Ser96 each carry the phosphoserine modification. The segment at 141 to 185 is disordered; that stretch reads APSSITATAVKRPPVTRPAPRAAGGAAAKKPAGTGAAASSGAAAA. Over residues 149–185 the composition is skewed to low complexity; sequence AVKRPPVTRPAPRAAGGAAAKKPAGTGAAASSGAAAA. The stretch at 196 to 346 forms a coiled coil; it reads KARFHDLLEK…ELHNTVMDLR (151 aa). The 323-residue stretch at 348–670 folds into the Kinesin motor domain; that stretch reads NIRVFCRIRP…LRFAASVNSC (323 aa). ATP is bound at residue 434 to 441; the sequence is GQTGSGKT. Positions 664–668 are required for minus-end directionality; that stretch reads AASVN. The disordered stretch occupies residues 681–700; that stretch reads LNNSVANSSTQSNNSGSFDK.

The protein belongs to the TRAFAC class myosin-kinesin ATPase superfamily. Kinesin family. NCD subfamily.

The protein resides in the cytoplasm. It is found in the cytoskeleton. It carries out the reaction ATP + H2O = ADP + phosphate + H(+). Functionally, minus-end-directed microtubule-based motor protein. Has ATPase activity. Required for normal chromosomal segregation in meiosis in females, and in early mitotic divisions of the embryo. The sequence is that of Protein claret segregational (ncd) from Drosophila melanogaster (Fruit fly).